The primary structure comprises 666 residues: Endogenous retrovirus group K member 7 Gag polyprotein (666 aa).

The N-myristoyl glycine moiety is linked to residue glycine 2. 2 disordered regions span residues 165–205 and 217–264; these read GKGP…NKTQ and ELQY…GSEL. Pro residues predominate over residues 232–247; it reads GMPPAPQGRAPYPQPP. CCHC-type zinc fingers lie at residues 544 to 561 and 580 to 597; these read GKCY…NCPV and DLCP…QCRS. The interval 598 to 641 is disordered; that stretch reads KFDKNGQPLSGNEQRGQPQAPQQTGAFPIQPFVPQGFQEQQPPL. Over residues 604–622 the composition is skewed to polar residues; the sequence is QPLSGNEQRGQPQAPQQTG.

Belongs to the beta type-B retroviral Gag protein family. HERV class-II K(HML-2) gag subfamily. Specific enzymatic cleavages may yield mature proteins. In terms of processing, myristoylation is essential for retroviral assembly. Alteration of the glycine residue leads to a block in the budding of particles and an accumulation of Gag inside the cell.

It localises to the cell membrane. In terms of biological role, the products of the Gag polyproteins of infectious retroviruses perform highly complex orchestrated tasks during the assembly, budding, maturation, and infection stages of the viral replication cycle. During viral assembly, the proteins form membrane associations and self-associations that ultimately result in budding of an immature virion from the infected cell. Gag precursors also function during viral assembly to selectively bind and package two plus strands of genomic RNA. Endogenous Gag proteins may have kept, lost or modified their original function during evolution. The polypeptide is Endogenous retrovirus group K member 7 Gag polyprotein (ERVK-7) (Homo sapiens (Human)).